We begin with the raw amino-acid sequence, 416 residues long: D-amino acid dehydrogenase 2 (416 aa).

3–17 (ITVLGAGVVGTAAAY) is a binding site for FAD.

It belongs to the DadA oxidoreductase family. Requires FAD as cofactor.

The enzyme catalyses a D-alpha-amino acid + A + H2O = a 2-oxocarboxylate + AH2 + NH4(+). Functionally, oxidative deamination of D-amino acids. The protein is D-amino acid dehydrogenase 2 (dadA2) of Mesorhizobium japonicum (strain LMG 29417 / CECT 9101 / MAFF 303099) (Mesorhizobium loti (strain MAFF 303099)).